The primary structure comprises 774 residues: 5-methyltetrahydropteroyltriglutamate--homocysteine methyltransferase (774 aa).

5-methyltetrahydropteroyltri-L-glutamate contacts are provided by residues 23 to 26 (RELK) and lysine 123. Residues 446-448 (IGS) and glutamate 499 contribute to the L-homocysteine site. L-methionine-binding positions include 446 to 448 (IGS) and glutamate 499. 5-methyltetrahydropteroyltri-L-glutamate is bound by residues 530–531 (RC) and tryptophan 576. Aspartate 614 lines the L-homocysteine pocket. Aspartate 614 contacts L-methionine. Residue glutamate 620 coordinates 5-methyltetrahydropteroyltri-L-glutamate. Residues histidine 656, cysteine 658, and glutamate 680 each contribute to the Zn(2+) site. The active-site Proton donor is the histidine 709. Cysteine 741 provides a ligand contact to Zn(2+).

This sequence belongs to the vitamin-B12 independent methionine synthase family. Zn(2+) serves as cofactor.

It carries out the reaction 5-methyltetrahydropteroyltri-L-glutamate + L-homocysteine = tetrahydropteroyltri-L-glutamate + L-methionine. Its pathway is amino-acid biosynthesis; L-methionine biosynthesis via de novo pathway; L-methionine from L-homocysteine (MetE route): step 1/1. Catalyzes the transfer of a methyl group from 5-methyltetrahydrofolate to homocysteine resulting in methionine formation. The polypeptide is 5-methyltetrahydropteroyltriglutamate--homocysteine methyltransferase (Aliivibrio fischeri (strain ATCC 700601 / ES114) (Vibrio fischeri)).